Consider the following 284-residue polypeptide: 2-dehydro-3-deoxyphosphooctonate aldolase (284 aa).

The protein belongs to the KdsA family.

The protein localises to the cytoplasm. The enzyme catalyses D-arabinose 5-phosphate + phosphoenolpyruvate + H2O = 3-deoxy-alpha-D-manno-2-octulosonate-8-phosphate + phosphate. The protein operates within carbohydrate biosynthesis; 3-deoxy-D-manno-octulosonate biosynthesis; 3-deoxy-D-manno-octulosonate from D-ribulose 5-phosphate: step 2/3. Its pathway is bacterial outer membrane biogenesis; lipopolysaccharide biosynthesis. In Ralstonia pickettii (strain 12J), this protein is 2-dehydro-3-deoxyphosphooctonate aldolase.